Reading from the N-terminus, the 150-residue chain is Large ribosomal subunit protein bL9 (150 aa).

Belongs to the bacterial ribosomal protein bL9 family.

In terms of biological role, binds to the 23S rRNA. This is Large ribosomal subunit protein bL9 from Herminiimonas arsenicoxydans.